Consider the following 273-residue polypeptide: Urease accessory protein UreD (273 aa).

Residues 1-29 (MLMRTATPLDQPRAIGSARVSSKRVNGGS) are disordered.

This sequence belongs to the UreD family. As to quaternary structure, ureD, UreF and UreG form a complex that acts as a GTP-hydrolysis-dependent molecular chaperone, activating the urease apoprotein by helping to assemble the nickel containing metallocenter of UreC. The UreE protein probably delivers the nickel.

Its subcellular location is the cytoplasm. Functionally, required for maturation of urease via the functional incorporation of the urease nickel metallocenter. The chain is Urease accessory protein UreD from Roseobacter denitrificans (strain ATCC 33942 / OCh 114) (Erythrobacter sp. (strain OCh 114)).